A 232-amino-acid polypeptide reads, in one-letter code: 2-C-methyl-D-erythritol 4-phosphate cytidylyltransferase (232 aa).

It belongs to the IspD/TarI cytidylyltransferase family. IspD subfamily.

It carries out the reaction 2-C-methyl-D-erythritol 4-phosphate + CTP + H(+) = 4-CDP-2-C-methyl-D-erythritol + diphosphate. It participates in isoprenoid biosynthesis; isopentenyl diphosphate biosynthesis via DXP pathway; isopentenyl diphosphate from 1-deoxy-D-xylulose 5-phosphate: step 2/6. Functionally, catalyzes the formation of 4-diphosphocytidyl-2-C-methyl-D-erythritol from CTP and 2-C-methyl-D-erythritol 4-phosphate (MEP). This chain is 2-C-methyl-D-erythritol 4-phosphate cytidylyltransferase, found in Stenotrophomonas maltophilia (strain R551-3).